An 89-amino-acid polypeptide reads, in one-letter code: Porphobilinogen deaminase (89 aa).

This sequence belongs to the HMBS family. As to quaternary structure, monomer. Dipyrromethane serves as cofactor.

It catalyses the reaction 4 porphobilinogen + H2O = hydroxymethylbilane + 4 NH4(+). The protein operates within porphyrin-containing compound metabolism; protoporphyrin-IX biosynthesis; coproporphyrinogen-III from 5-aminolevulinate: step 2/4. Functionally, tetrapolymerization of the monopyrrole PBG into the hydroxymethylbilane pre-uroporphyrinogen in several discrete steps. The chain is Porphobilinogen deaminase (hemC) from Dickeya chrysanthemi (Pectobacterium chrysanthemi).